The following is a 623-amino-acid chain: Xaa-Pro aminopeptidase 1 (623 aa).

Position 77 (R77) interacts with a peptide. Position 304 is an N6-acetyllysine (K304). Residue H395 coordinates a peptide. Mn(2+)-binding residues include D415, D426, and H489. Positions 489, 498, and 523 each coordinate a peptide. Mn(2+) is bound by residues E523 and E537.

This sequence belongs to the peptidase M24B family. In terms of assembly, homodimer. Requires Mn(2+) as cofactor.

The protein resides in the cytoplasm. It is found in the cytosol. It carries out the reaction Release of any N-terminal amino acid, including proline, that is linked to proline, even from a dipeptide or tripeptide.. In terms of biological role, metalloaminopeptidase that catalyzes the removal of a penultimate prolyl residue from the N-termini of peptides, such as Arg-Pro-Pro. Contributes to the degradation of bradykinin. In Bos taurus (Bovine), this protein is Xaa-Pro aminopeptidase 1 (XPNPEP1).